The following is a 405-amino-acid chain: Serpin I2 (405 aa).

Positions 1 to 18 are cleaved as a signal peptide; sequence MDTIFLWSLLLLFFGSQA. 3 N-linked (GlcNAc...) asparagine glycosylation sites follow: N202, N207, and N306.

It belongs to the serpin family. Expressed in pancreas and adipose tissues.

Its subcellular location is the secreted. This chain is Serpin I2 (SERPINI2), found in Homo sapiens (Human).